The chain runs to 224 residues: Heme response regulator HssR (224 aa).

One can recognise a Response regulatory domain in the interval 3–116 (QCLVVDDDPR…ELIFRIRAVL (114 aa)). A 4-aspartylphosphate modification is found at aspartate 52. Positions 124–222 (NSEMTIGNLT…VRGQGYKVEN (99 aa)) form a DNA-binding region, ompR/PhoB-type.

In terms of processing, phosphorylated by HssS.

It is found in the cytoplasm. Functionally, member of the two-component regulatory system HssS/HssR involved in intracellular heme homeostasis and tempering of staphylococcal virulence. Phosphorylated HssR binds to a direct repeat sequence within hrtAB promoter and activates the expression of hrtAB, an efflux pump, in response to extracellular heme, hemin, hemoglobin or blood. In Staphylococcus aureus (strain COL), this protein is Heme response regulator HssR (hssR).